Reading from the N-terminus, the 1250-residue chain is SRC kinase signaling inhibitor 1 (1250 aa).

A compositionally biased stretch (basic and acidic residues) spans 19-45 (AEGRARSPREEVGPRDPGGRGEPDPER). Positions 19–78 (AEGRARSPREEVGPRDPGGRGEPDPERSSPPMLSADDAEYPREYRTLGGGGGGGSGGRRF) are disordered. Phosphoserine is present on residues Ser-47 and Ser-52. Over residues 65–75 (LGGGGGGGSGG) the composition is skewed to gly residues. Ser-79 is modified (phosphoserine). Thr-86 is subject to Phosphothreonine. 7 positions are modified to phosphoserine: Ser-87, Ser-98, Ser-211, Ser-233, Ser-237, Ser-247, and Ser-293. Tyr-309 is modified (phosphotyrosine). A disordered region spans residues 352–448 (ASRESSPTRR…RRDVKPDEDL (97 aa)). Polar residues predominate over residues 354–364 (RESSPTRRLNN). The segment covering 365–374 (LSPASHLASS) has biased composition (low complexity). Phosphoserine occurs at positions 366, 375, and 392. The segment covering 381-399 (PSGLPSGLPSGSPSRSRLS) has biased composition (low complexity). Omega-N-methylarginine occurs at positions 397 and 404. Phosphoserine occurs at positions 411, 430, and 432. The span at 437 to 448 (LERRDVKPDEDL) shows a compositional bias: basic and acidic residues. Tyr-464 carries the phosphotyrosine modification. A disordered region spans residues 538–710 (PSSPQKLADV…ASSTPAGQPT (173 aa)). Pro residues predominate over residues 552–563 (GGPPPPHSPYSG). Phosphoserine is present on residues Ser-559, Ser-562, and Ser-566. Residue Arg-567 is modified to Omega-N-methylarginine. Phosphoserine occurs at positions 569, 579, 581, 583, and 588. Positions 590–607 (GGKARSTGSASTAGAPPS) are enriched in low complexity. A compositionally biased stretch (basic and acidic residues) spans 628–640 (KDTETRERMEAME). A phosphoserine mark is found at Ser-664 and Ser-688. Thr-691 and Thr-704 each carry phosphothreonine. The span at 701–710 (ASSTPAGQPT) shows a compositional bias: low complexity. Coiled coils occupy residues 712-753 (VSRL…RALL) and 793-813 (EELI…IQRD). The tract at residues 714-764 (RLQMQLHLRGLQNSASDLRGQLQQLRNVQLQNQESVRALLKPTEADVSMRV) is interaction with SNAP25. Phosphoserine occurs at positions 911 and 933. Disordered regions lie at residues 924–982 (GLDF…ERDW) and 1016–1094 (DCAS…TGEV). Thr-951 carries the post-translational modification Phosphothreonine. A Phosphoserine modification is found at Ser-1054. A compositionally biased stretch (pro residues) spans 1069-1078 (KSPPPPPPRR). Phosphoserine is present on residues Ser-1110 and Ser-1127. The tract at residues 1155 to 1250 (ELESGGSSVP…FGARNSSISF (96 aa)) is disordered. Polar residues predominate over residues 1217 to 1250 (PNETSSPGSEKPSGSRTSIPVLTSFGARNSSISF).

The protein belongs to the SRCIN1 family. Interacts with the N-terminal coiled-coil region of SNAP25. Interacts with BCAR1/p130Cas and SRC through its C-terminal domain. Interacts with CSK, CTTN, SORBS3/vinexin, SYP and MAPRE3/EB3. Post-translationally, tyrosine-phosphorylated in response to EGF and to cell adhesion to integrin ligands. In terms of tissue distribution, expressed predominantly in central nervous system with high levels detected in cortex, cerebellum, midbrain and spinal cord (at protein level). Also expressed in testis and epithelial-rich tissues such as mammary gland, lung and kidney.

It localises to the cytoplasm. It is found in the cytoskeleton. The protein resides in the cell projection. The protein localises to the axon. Its subcellular location is the dendrite. It localises to the presynapse. It is found in the postsynapse. The protein resides in the postsynaptic density. Acts as a negative regulator of SRC by activating CSK which inhibits SRC activity and downstream signaling, leading to impaired cell spreading and migration. Regulates dendritic spine morphology. Involved in calcium-dependent exocytosis. May play a role in neurotransmitter release or synapse maintenance. The polypeptide is SRC kinase signaling inhibitor 1 (Srcin1) (Mus musculus (Mouse)).